The following is a 342-amino-acid chain: Galactose mutarotase (342 aa).

N-acetylalanine is present on A2. Position 14 is a phosphoserine (S14). Beta-D-galactose is bound by residues 81 to 82 and H107; that span reads NR. A Phosphoserine modification is found at S124. Residue H176 is the Proton donor of the active site. Beta-D-galactose contacts are provided by residues 176-178, D243, Q279, and E307; that span reads HSY. The Proton acceptor role is filled by E307.

Belongs to the aldose epimerase family. In terms of assembly, monomer.

Its subcellular location is the cytoplasm. It catalyses the reaction alpha-D-galactose = beta-D-galactose. The catalysed reaction is alpha-D-glucose = beta-D-glucose. It functions in the pathway carbohydrate metabolism; hexose metabolism. It participates in carbohydrate metabolism; galactose metabolism. Mutarotase that catalyzes the interconversion of beta-D-galactose and alpha-D-galactose during galactose metabolism. Beta-D-galactose is metabolized in the liver into glucose 1-phosphate, the primary metabolic fuel, by the action of four enzymes that constitute the Leloir pathway: GALM, GALK1 (galactokinase), GALT (galactose-1-phosphate uridylyltransferase) and GALE (UDP-galactose-4'-epimerase). Involved in the maintenance of the equilibrium between the beta- and alpha-anomers of galactose, therefore ensuring a sufficient supply of the alpha-anomer for GALK1. Also active on D-glucose although shows a preference for galactose over glucose. This is Galactose mutarotase from Homo sapiens (Human).